Consider the following 266-residue polypeptide: 3-oxoadipate enol-lactonase 1 (266 aa).

The AB hydrolase-1 domain maps to 28–250; that stretch reads PAIVFSNSLG…DASHLSNIEQ (223 aa).

It carries out the reaction (4,5-dihydro-5-oxofuran-2-yl)-acetate + H2O = 3-oxoadipate + H(+). Its pathway is aromatic compound metabolism; beta-ketoadipate pathway; 3-oxoadipate from 5-oxo-4,5-dihydro-2-furylacetate: step 1/1. This is 3-oxoadipate enol-lactonase 1 (pcaD) from Acinetobacter baylyi (strain ATCC 33305 / BD413 / ADP1).